Here is a 112-residue protein sequence, read N- to C-terminus: HTH-type transcriptional regulator YodB (112 aa).

An HTH hxlR-type domain is found at 6-105 (CPKMESAFSL…WADQFCEPGD (100 aa)).

Its function is as follows. Negatively regulates yodC and azoR1 which may contribute to the degradation of aromatic compounds. Probably positively regulates the catechol-specific transcription of mhqNOP, mhqED, and mhqA. This is HTH-type transcriptional regulator YodB (yodB) from Bacillus subtilis (strain 168).